The primary structure comprises 1097 residues: Nitric oxide synthase-like protein (1097 aa).

Heme b is bound at residue C77. 5 residues coordinate L-arginine: Q140, W249, Y250, E254, and N259. W340 and F353 together coordinate (6R)-L-erythro-5,6,7,8-tetrahydrobiopterin. Y368 is a heme b binding site. The calmodulin-binding stretch occupies residues 387–410 (KRPINRKFHFKQIARAVKFTSKLF). The Flavodoxin-like domain maps to 420–615 (ATVLYATETG…AFRKWASSVF (196 aa)). FMN-binding positions include 426-430 (TETGK) and 561-592 (VFAL…ERIH). One can recognise an FAD-binding FR-type domain in the interval 669 to 914 (KQFVSCTVKA…IRSAPNFHLP (246 aa)). Residues 704–715 (YNPGDHVGIIAC) and 847–857 (LQPRFYSISSS) contribute to the FAD site. NADP(+) is bound by residues 922–940 (ILIG…WHHR) and 1019–1034 (GAHF…AEDV).

The protein belongs to the NOS family. Heme b serves as cofactor. FAD is required as a cofactor. It depends on FMN as a cofactor.

It carries out the reaction 2 L-arginine + 3 NADPH + 4 O2 + H(+) = 2 L-citrulline + 2 nitric oxide + 3 NADP(+) + 4 H2O. Its function is as follows. Produces nitric oxide (NO) which is a messenger molecule with diverse functions throughout the body. The protein is Nitric oxide synthase-like protein of Bombyx mori (Silk moth).